Consider the following 337-residue polypeptide: ERI1 exoribonuclease 3 (337 aa).

An Exonuclease domain is found at 146–320 (FLVLDFEATC…DDCKNIANIM (175 aa)). Mg(2+)-binding residues include Asp-150, Glu-152, and Asp-249. Residue Glu-152 is the Proton acceptor of the active site. Glu-152 provides a ligand contact to AMP. His-307 serves as the catalytic Proton acceptor. His-307 serves as a coordination point for AMP. Asp-312 is a binding site for Mg(2+).

Interacts with PRNP. Requires Mg(2+) as cofactor. Highly expressed in the brain, heart, thyroid and testis. Expressed at low levels in the muscle cells, liver, pancreas and kidney.

The sequence is that of ERI1 exoribonuclease 3 (Eri3) from Mus musculus (Mouse).